Consider the following 1069-residue polypeptide: Receptor-type guanylate cyclase gcy-29 (1069 aa).

An N-terminal signal peptide occupies residues 1–23 (MLPNFWNFQFIFVIFCWIPIVVS). Residues 24-458 (DEKIVLKIGS…FREENCDYTQ (435 aa)) are Extracellular-facing. 3 N-linked (GlcNAc...) asparagine glycosylation sites follow: asparagine 161, asparagine 240, and asparagine 407. The chain crosses the membrane as a helical span at residues 459–479 (TIVIATAVVCIILTVFLGIWL). The Cytoplasmic segment spans residues 480–1069 (RRACETSALD…FKKKNNTFDF (590 aa)). A Protein kinase domain is found at 497-806 (RDDVQILDEE…RVRLATEIAL (310 aa)). ATP is bound by residues 503 to 511 (LDEEQVKSV) and lysine 527. The 131-residue stretch at 876–1006 (TVMFSDIVGF…ETVNIAAVME (131 aa)) folds into the Guanylate cyclase domain. Mg(2+) is bound by residues aspartate 881, isoleucine 882, and aspartate 925.

The protein belongs to the adenylyl cyclase class-4/guanylyl cyclase family. As to expression, expressed bilaterally in ASE and AFD sensory neurons.

The protein resides in the cell membrane. The catalysed reaction is GTP = 3',5'-cyclic GMP + diphosphate. Its function is as follows. Guanylate cyclase involved in the production of the second messenger cGMP. The protein is Receptor-type guanylate cyclase gcy-29 of Caenorhabditis elegans.